We begin with the raw amino-acid sequence, 161 residues long: 3-isopropylmalate dehydratase small subunit (161 aa).

This sequence belongs to the LeuD family. LeuD type 2 subfamily. As to quaternary structure, heterodimer of LeuC and LeuD.

The catalysed reaction is (2R,3S)-3-isopropylmalate = (2S)-2-isopropylmalate. Its pathway is amino-acid biosynthesis; L-leucine biosynthesis; L-leucine from 3-methyl-2-oxobutanoate: step 2/4. Functionally, catalyzes the isomerization between 2-isopropylmalate and 3-isopropylmalate, via the formation of 2-isopropylmaleate. In Sulfolobus acidocaldarius (strain ATCC 33909 / DSM 639 / JCM 8929 / NBRC 15157 / NCIMB 11770), this protein is 3-isopropylmalate dehydratase small subunit.